Reading from the N-terminus, the 367-residue chain is UDP-N-acetylglucosamine--N-acetylmuramyl-(pentapeptide) pyrophosphoryl-undecaprenol N-acetylglucosamine transferase (367 aa).

UDP-N-acetyl-alpha-D-glucosamine-binding positions include 15 to 17, Asn127, Arg163, Ser191, Ile249, and Gln294; that span reads TGG.

It belongs to the glycosyltransferase 28 family. MurG subfamily.

The protein localises to the cell inner membrane. The catalysed reaction is di-trans,octa-cis-undecaprenyl diphospho-N-acetyl-alpha-D-muramoyl-L-alanyl-D-glutamyl-meso-2,6-diaminopimeloyl-D-alanyl-D-alanine + UDP-N-acetyl-alpha-D-glucosamine = di-trans,octa-cis-undecaprenyl diphospho-[N-acetyl-alpha-D-glucosaminyl-(1-&gt;4)]-N-acetyl-alpha-D-muramoyl-L-alanyl-D-glutamyl-meso-2,6-diaminopimeloyl-D-alanyl-D-alanine + UDP + H(+). It participates in cell wall biogenesis; peptidoglycan biosynthesis. Functionally, cell wall formation. Catalyzes the transfer of a GlcNAc subunit on undecaprenyl-pyrophosphoryl-MurNAc-pentapeptide (lipid intermediate I) to form undecaprenyl-pyrophosphoryl-MurNAc-(pentapeptide)GlcNAc (lipid intermediate II). The protein is UDP-N-acetylglucosamine--N-acetylmuramyl-(pentapeptide) pyrophosphoryl-undecaprenol N-acetylglucosamine transferase of Burkholderia mallei (strain NCTC 10247).